The primary structure comprises 218 residues: Ribose-5-phosphate isomerase A (218 aa).

Substrate contacts are provided by residues 28 to 31 (TGST), 81 to 84 (DGAD), and 94 to 97 (KGGG). Glu103 functions as the Proton acceptor in the catalytic mechanism. Lys121 provides a ligand contact to substrate.

The protein belongs to the ribose 5-phosphate isomerase family. As to quaternary structure, homodimer.

The enzyme catalyses aldehydo-D-ribose 5-phosphate = D-ribulose 5-phosphate. It participates in carbohydrate degradation; pentose phosphate pathway; D-ribose 5-phosphate from D-ribulose 5-phosphate (non-oxidative stage): step 1/1. Its function is as follows. Catalyzes the reversible conversion of ribose-5-phosphate to ribulose 5-phosphate. The sequence is that of Ribose-5-phosphate isomerase A from Vibrio parahaemolyticus serotype O3:K6 (strain RIMD 2210633).